The chain runs to 336 residues: 2-phospho-L-lactate transferase (336 aa).

Asp49 serves as a coordination point for 7,8-didemethyl-8-hydroxy-5-deazariboflavin.

It belongs to the CofD family. In terms of assembly, homodimer. Mg(2+) is required as a cofactor.

The catalysed reaction is (2S)-lactyl-2-diphospho-5'-guanosine + 7,8-didemethyl-8-hydroxy-5-deazariboflavin = oxidized coenzyme F420-0 + GMP + H(+). It functions in the pathway cofactor biosynthesis; coenzyme F420 biosynthesis. Catalyzes the transfer of the 2-phospholactate moiety from (2S)-lactyl-2-diphospho-5'-guanosine to 7,8-didemethyl-8-hydroxy-5-deazariboflavin (FO) with the formation of oxidized coenzyme F420-0 and GMP. The polypeptide is 2-phospho-L-lactate transferase (Halobacterium salinarum (strain ATCC 700922 / JCM 11081 / NRC-1) (Halobacterium halobium)).